The primary structure comprises 186 residues: CRS2-like protein, chloroplastic (186 aa).

The transit peptide at 1 to 49 directs the protein to the chloroplast; sequence MAMTAASVFGSGGCLELLTSSKAMRGKLWTRLAPFISKRHASTSQTSLS. TRNA is bound at residue Tyr-73. Catalysis depends on His-78, which acts as the Proton acceptor. The tRNA site is built by Tyr-123, Asn-125, and Asn-171.

This sequence belongs to the PTH family.

The protein localises to the plastid. The protein resides in the chloroplast. The protein is CRS2-like protein, chloroplastic of Oryza sativa subsp. japonica (Rice).